A 74-amino-acid chain; its full sequence is uncharacterized protein (74 aa).

This is an uncharacterized protein from Homo sapiens (Human).